Consider the following 1825-residue polypeptide: Serine protease/ABC transporter B family protein tagD (1825 aa).

Positions Met-1–Phe-26 are cleaved as a signal peptide. One can recognise a Peptidase S8 domain in the interval Pro-307–Ala-727. Active-site charge relay system residues include Asp-338 and His-384. Asn-629 is a glycosylation site (N-linked (GlcNAc...) asparagine). Ser-652 functions as the Charge relay system in the catalytic mechanism. N-linked (GlcNAc...) asparagine glycans are attached at residues Asn-704, Asn-781, Asn-849, and Asn-896. Residues Tyr-971–Ile-991 traverse the membrane as a helical segment. The N-linked (GlcNAc...) asparagine glycan is linked to Asn-1018. Transmembrane regions (helical) follow at residues Phe-1071–Leu-1091, Phe-1116–Ile-1136, Gly-1189–Phe-1209, and Thr-1210–Thr-1230. The region spanning Ile-1075–Gln-1358 is the ABC transmembrane type-1 domain. Asn-1295 carries an N-linked (GlcNAc...) asparagine glycan. 2 consecutive transmembrane segments (helical) span residues Trp-1304–Gln-1324 and Phe-1327–Thr-1347. The disordered stretch occupies residues Asp-1386–Ile-1529. Low complexity predominate over residues Ile-1388 to Asp-1402. Residues Asp-1403 to Asn-1415 are compositionally biased toward acidic residues. A glycan (N-linked (GlcNAc...) asparagine) is linked at Asn-1424. The segment covering Gly-1465 to Asn-1494 has biased composition (low complexity). Positions Glu-1495–Asn-1514 are enriched in acidic residues. Residues Asn-1515–Ile-1529 are compositionally biased toward low complexity. In terms of domain architecture, ABC transporter spans Ile-1576–Phe-1813. N-linked (GlcNAc...) asparagine glycosylation occurs at Asn-1580. Residue Gly-1611–Ser-1618 coordinates ATP. Asn-1715 and Asn-1755 each carry an N-linked (GlcNAc...) asparagine glycan.

The protein in the C-terminal section; belongs to the ABC transporter superfamily. ABCB family. Multidrug resistance exporter (TC 3.A.1.201) subfamily. It in the N-terminal section; belongs to the peptidase S8 family.

The protein resides in the membrane. The polypeptide is Serine protease/ABC transporter B family protein tagD (tagD) (Dictyostelium discoideum (Social amoeba)).